We begin with the raw amino-acid sequence, 253 residues long: Indole-3-glycerol phosphate synthase (253 aa).

Belongs to the TrpC family.

It carries out the reaction 1-(2-carboxyphenylamino)-1-deoxy-D-ribulose 5-phosphate + H(+) = (1S,2R)-1-C-(indol-3-yl)glycerol 3-phosphate + CO2 + H2O. The protein operates within amino-acid biosynthesis; L-tryptophan biosynthesis; L-tryptophan from chorismate: step 4/5. This chain is Indole-3-glycerol phosphate synthase, found in Bacillus cereus (strain ATCC 10987 / NRS 248).